The following is a 149-amino-acid chain: Transcriptional repressor NrdR (149 aa).

Residues 3-34 (CPFCSATDTKVIDSRLVAEGHQVRRRRECTEC) fold into a zinc finger. The ATP-cone domain occupies 49-139 (PRVIKRDGTR…VYRAFEDVSE (91 aa)).

This sequence belongs to the NrdR family. The cofactor is Zn(2+).

Its function is as follows. Negatively regulates transcription of bacterial ribonucleotide reductase nrd genes and operons by binding to NrdR-boxes. The protein is Transcriptional repressor NrdR of Shewanella sp. (strain MR-4).